A 542-amino-acid polypeptide reads, in one-letter code: Putative ankyrin repeat protein FPV115 (542 aa).

8 ANK repeats span residues 33 to 62 (FRNL…DPNS), 157 to 186 (DGLL…KTNL), 218 to 247 (NDIN…DINT), 251 to 281 (KGKT…DINV), 285 to 314 (EGLT…DVKV), 316 to 345 (TTST…EFIT), 347 to 375 (DYLS…DVNS), and 378 to 407 (CIST…NINA).

This Fowlpox virus (strain NVSL) (FPV) protein is Putative ankyrin repeat protein FPV115.